The following is a 408-amino-acid chain: 3-phosphoshikimate 1-carboxyvinyltransferase (408 aa).

3-phosphoshikimate is bound by residues Lys10, Ser11, and Arg15. Lys10 contacts phosphoenolpyruvate. Phosphoenolpyruvate-binding residues include Gly79 and Arg107. Residues Ser150, Ser151, Gln152, Ser179, Glu297, and His324 each contribute to the 3-phosphoshikimate site. Gln152 contributes to the phosphoenolpyruvate binding site. Glu297 acts as the Proton acceptor in catalysis. Phosphoenolpyruvate is bound by residues Arg328, Arg369, and Lys394.

The protein belongs to the EPSP synthase family. In terms of assembly, monomer.

It localises to the cytoplasm. The enzyme catalyses 3-phosphoshikimate + phosphoenolpyruvate = 5-O-(1-carboxyvinyl)-3-phosphoshikimate + phosphate. It participates in metabolic intermediate biosynthesis; chorismate biosynthesis; chorismate from D-erythrose 4-phosphate and phosphoenolpyruvate: step 6/7. Its function is as follows. Catalyzes the transfer of the enolpyruvyl moiety of phosphoenolpyruvate (PEP) to the 5-hydroxyl of shikimate-3-phosphate (S3P) to produce enolpyruvyl shikimate-3-phosphate and inorganic phosphate. This Corynebacterium efficiens (strain DSM 44549 / YS-314 / AJ 12310 / JCM 11189 / NBRC 100395) protein is 3-phosphoshikimate 1-carboxyvinyltransferase.